We begin with the raw amino-acid sequence, 410 residues long: Arginine deiminase (410 aa).

The Amidino-cysteine intermediate role is filled by cysteine 400.

This sequence belongs to the arginine deiminase family.

The protein localises to the cytoplasm. The catalysed reaction is L-arginine + H2O = L-citrulline + NH4(+). Its pathway is amino-acid degradation; L-arginine degradation via ADI pathway; carbamoyl phosphate from L-arginine: step 1/2. This Streptococcus uberis (strain ATCC BAA-854 / 0140J) protein is Arginine deiminase.